The following is a 59-amino-acid chain: MKLSQVVVSAVAFTGLVSAANSSNSSSSKNAAQPIAGLNNGKVAGAAGVALAGALAFLI.

An N-terminal signal peptide occupies residues 1-19 (MKLSQVVVSAVAFTGLVSA).

This sequence to yeast DDR2.

The chain is Protein HOR7 (HOR7) from Saccharomyces cerevisiae (strain ATCC 204508 / S288c) (Baker's yeast).